Reading from the N-terminus, the 208-residue chain is Imidazole glycerol phosphate synthase subunit HisH (208 aa).

The Glutamine amidotransferase type-1 domain occupies 1-206 (MIVIIDYDTG…KEVIRSCKSS (206 aa)). The Nucleophile role is filled by Cys-79. Residues His-181 and Glu-183 contribute to the active site.

Heterodimer of HisH and HisF.

The protein localises to the cytoplasm. It catalyses the reaction 5-[(5-phospho-1-deoxy-D-ribulos-1-ylimino)methylamino]-1-(5-phospho-beta-D-ribosyl)imidazole-4-carboxamide + L-glutamine = D-erythro-1-(imidazol-4-yl)glycerol 3-phosphate + 5-amino-1-(5-phospho-beta-D-ribosyl)imidazole-4-carboxamide + L-glutamate + H(+). The enzyme catalyses L-glutamine + H2O = L-glutamate + NH4(+). The protein operates within amino-acid biosynthesis; L-histidine biosynthesis; L-histidine from 5-phospho-alpha-D-ribose 1-diphosphate: step 5/9. Functionally, IGPS catalyzes the conversion of PRFAR and glutamine to IGP, AICAR and glutamate. The HisH subunit catalyzes the hydrolysis of glutamine to glutamate and ammonia as part of the synthesis of IGP and AICAR. The resulting ammonia molecule is channeled to the active site of HisF. In Listeria welshimeri serovar 6b (strain ATCC 35897 / DSM 20650 / CCUG 15529 / CIP 8149 / NCTC 11857 / SLCC 5334 / V8), this protein is Imidazole glycerol phosphate synthase subunit HisH.